The chain runs to 77 residues: Immune protein Tsi2 (77 aa).

Forms a heterotetramer with Tse2 consisting of two Tse2 dimers and two Tsi2 dimers. Formation of the complex inactivates Tse2 enzymatic activity.

Functionally, immunity protein that plays a role in preventing early activation of toxin Tse2. Binds to a large surface of Tse2 and thereby occludes the active site to specifically inhibits Tse2. This chain is Immune protein Tsi2, found in Pseudomonas aeruginosa (strain ATCC 15692 / DSM 22644 / CIP 104116 / JCM 14847 / LMG 12228 / 1C / PRS 101 / PAO1).